Reading from the N-terminus, the 123-residue chain is Small ribosomal subunit protein bS16 (123 aa).

Residues 79–123 (AGIAKRPSRNNPTKGEPGKKAQERLALAKQAEEEAAAKAAEAASE) are disordered.

The protein belongs to the bacterial ribosomal protein bS16 family.

This chain is Small ribosomal subunit protein bS16, found in Brucella melitensis biotype 2 (strain ATCC 23457).